Here is a 260-residue protein sequence, read N- to C-terminus: 3-alpha-(or 20-beta)-hydroxysteroid dehydrogenase (260 aa).

NAD(+)-binding residues include Arg-17, Met-19, Asp-38, Asp-61, Val-62, Asn-88, Tyr-153, Lys-157, Val-186, Thr-188, and Thr-191. Residue Tyr-153 is the Proton acceptor of the active site.

This sequence belongs to the short-chain dehydrogenases/reductases (SDR) family. As to quaternary structure, homotetramer.

It carries out the reaction androstan-3alpha,17beta-diol + NAD(+) = 17beta-hydroxyandrostanone + NADH + H(+). It functions in the pathway lipid metabolism; steroid degradation. In terms of biological role, probably involved in steroid metabolism. This chain is 3-alpha-(or 20-beta)-hydroxysteroid dehydrogenase (fabG3), found in Mycobacterium tuberculosis (strain CDC 1551 / Oshkosh).